Consider the following 248-residue polypeptide: Lysine-rich arabinogalactan protein 19 (248 aa).

The signal sequence occupies residues 1-24; the sequence is MESNSIIWSLLLASALISSFSVNA. Positions 25–37 are enriched in low complexity; the sequence is QGPAASPVTSTTT. Residues 25–221 form a disordered region; it reads QGPAASPVTS…APSPNTNGGN (197 aa). 3 stretches are compositionally biased toward pro residues: residues 38 to 57, 67 to 86, and 94 to 171; these read APPPTTAAPPTTAAPPPTTT, PASPVTPPPAVTPTSPPAPK, and ATPP…PAPA. Positions 173–187 are enriched in basic residues; sequence TKHKRKHKHKRHHHA. Pro residues predominate over residues 189–203; that stretch reads APAPIPPSPPSPPVL. Ser196 carries GPI-anchor amidated serine lipidation. A propeptide spans 197–248 (removed in mature form); sequence PPSPPVLTDPQDTAPAPSPNTNGGNALNQLKGRAVMWLNTGLVILFLLAMTA.

This sequence belongs to the lysine-rich AGP family. Post-translationally, O-glycosylated on the hydroxyproline residues. As to expression, strongly expressed in stems, moderately expressed in flowers and roots and weakly expressed in young leaves.

The protein resides in the cell membrane. Functionally, proteoglycan that seems to be implicated in diverse developmental roles such as differentiation, cell-cell recognition, embryogenesis and programmed cell death. This chain is Lysine-rich arabinogalactan protein 19 (AGP19), found in Arabidopsis thaliana (Mouse-ear cress).